A 223-amino-acid polypeptide reads, in one-letter code: Sigma non-opioid intracellular receptor 1 (223 aa).

Residues 1-9 (MQWAVGRRW) are Lumenal-facing. The targeting to endoplasmic reticulum-associated lipid droplets stretch occupies residues 2 to 8 (QWAVGRR). Residues 10–30 (LWVALFLAAVAVLTQIVWLWL) traverse the membrane as a helical segment. Topologically, residues 31–223 (GTQNFVFQRE…LTTYLFGQDP (193 aa)) are cytoplasmic. The tract at residues 99–106 (SLSEYVLL) is important for ligand-binding. The interval 177–223 (VIPSTLGFALADTVFSTQDFLTLFYTLRVYARALQLELTTYLFGQDP) is C-terminal hydrophobic region.

The protein belongs to the ERG2 family. As to quaternary structure, homotrimer. Forms a ternary complex with ANK2 and ITPR3. The complex is disrupted by agonists. Interacts with KCNA4. Interacts with KCNA2; cocaine consumption leads to increased interaction. Interacts with RNF112 in an oxidative stress-regulated manner. Ubiquitously expressed with higher expression in liver, kidney and steroid-producing tissues such as placenta, ovary and adrenal gland.

It localises to the nucleus inner membrane. Its subcellular location is the nucleus outer membrane. The protein resides in the nucleus envelope. It is found in the cytoplasmic vesicle. The protein localises to the endoplasmic reticulum membrane. It localises to the membrane. Its subcellular location is the lipid droplet. The protein resides in the cell junction. It is found in the cell membrane. The protein localises to the cell projection. It localises to the growth cone. Its subcellular location is the postsynaptic density membrane. Functions in lipid transport from the endoplasmic reticulum and is involved in a wide array of cellular functions probably through regulation of the biogenesis of lipid microdomains at the plasma membrane. Involved in the regulation of different receptors it plays a role in BDNF signaling and EGF signaling. Also regulates ion channels like the potassium channel and could modulate neurotransmitter release. Plays a role in calcium signaling through modulation together with ANK2 of the ITP3R-dependent calcium efflux at the endoplasmic reticulum. Plays a role in several other cell functions including proliferation, survival and death. Originally identified for its ability to bind various psychoactive drugs it is involved in learning processes, memory and mood alteration. Necessary for proper mitochondrial axonal transport in motor neurons, in particular the retrograde movement of mitochondria. Plays a role in protecting cells against oxidative stress-induced cell death via its interaction with RNF112. This Cavia porcellus (Guinea pig) protein is Sigma non-opioid intracellular receptor 1 (SIGMAR1).